Reading from the N-terminus, the 445-residue chain is Xylose isomerase (445 aa).

Active-site residues include His-99 and Asp-102. Mg(2+)-binding residues include Glu-230, Glu-266, His-269, Asp-294, Asp-305, Asp-307, and Asp-337.

It belongs to the xylose isomerase family. As to quaternary structure, homotetramer. Mg(2+) is required as a cofactor.

It localises to the cytoplasm. It catalyses the reaction alpha-D-xylose = alpha-D-xylulofuranose. The protein is Xylose isomerase of Geobacillus thermodenitrificans (strain NG80-2).